The following is a 388-amino-acid chain: Pepsin F (388 aa).

The first 15 residues, 1–15 (MKWLGLLGLVALSEC), serve as a signal peptide directing secretion. A propeptide spans 16–58 (LVTIPLMKVKSMRENLRENDILLDYLEKHPYRPTYKLLSGQQD) (activation peptide). A Peptidase A1 domain is found at 74-385 (YIGIISIGTP…DRANNRIGLA (312 aa)). The active site involves Asp-92. Cystine bridges form between Cys-105/Cys-110 and Cys-266/Cys-270. Asp-275 is an active-site residue. A disulfide bridge links Cys-309 with Cys-343.

This sequence belongs to the peptidase A1 family.

The protein resides in the secreted. It carries out the reaction Preferential cleavage: hydrophobic, preferably aromatic, residues in P1 and P1' positions. Cleaves 1-Phe-|-Val-2, 4-Gln-|-His-5, 13-Glu-|-Ala-14, 14-Ala-|-Leu-15, 15-Leu-|-Tyr-16, 16-Tyr-|-Leu-17, 23-Gly-|-Phe-24, 24-Phe-|-Phe-25 and 25-Phe-|-Tyr-26 bonds in the B chain of insulin.. Its function is as follows. Shows particularly broad specificity; although bonds involving phenylalanine and leucine are preferred, many others are also cleaved to some extent. The chain is Pepsin F from Oryctolagus cuniculus (Rabbit).